Consider the following 396-residue polypeptide: MTAFRTLDDADLADKRVLVRVDLNVPMESGRVTDETRLKAILPTIRTITDKGGKAVLLAHFGRPKGRDESQSLAPVAKALEGQLGRKVAFASDCVGEEASSAISRLAAGEVIVLENTRFHAGEEKNAPDFVEALASLGDIYVNDAFSAAHRAHASTEGLARKLPAYAGRSMESELAALTKALEAPVRPVLAVVGGSKVSSKLELLGNLVKKVDILVIAGGMANTFLAALGKKVGKSLCEHDLADTAREILEKAKAAGCEIVLPVDAVVAKEFKANAANRVVSVDEVGDDEMILDAGPETVAVVAQKLDGAKTVVWNGPFGAFEMTPFDAATVAVARDVGKRTRAGTLLSVAGGGDTVAALNHAGVAGDFSYVSTAGGAFLEWLEGKALPGVEALRR.

Substrate-binding positions include 22 to 24 (DLN), R37, 60 to 63 (HFGR), R118, and R151. ATP is bound by residues K201, E323, and 353-356 (GGDT).

This sequence belongs to the phosphoglycerate kinase family. As to quaternary structure, monomer.

The protein resides in the cytoplasm. It carries out the reaction (2R)-3-phosphoglycerate + ATP = (2R)-3-phospho-glyceroyl phosphate + ADP. It functions in the pathway carbohydrate degradation; glycolysis; pyruvate from D-glyceraldehyde 3-phosphate: step 2/5. The polypeptide is Phosphoglycerate kinase (Xanthobacter autotrophicus (strain ATCC BAA-1158 / Py2)).